A 714-amino-acid polypeptide reads, in one-letter code: Fatty acid oxidation complex subunit alpha (714 aa).

Residues 1 to 190 (MEMASAFTLN…KLGLVDDVVP (190 aa)) are enoyl-CoA hydratase. The 3-hydroxyacyl-CoA dehydrogenase stretch occupies residues 306–714 (APLNSVGILG…FWKTTATDLQ (409 aa)).

This sequence in the N-terminal section; belongs to the enoyl-CoA hydratase/isomerase family. The protein in the central section; belongs to the 3-hydroxyacyl-CoA dehydrogenase family. Heterotetramer of two alpha chains (FadJ) and two beta chains (FadI).

The protein localises to the cytoplasm. It carries out the reaction a (3S)-3-hydroxyacyl-CoA = a (2E)-enoyl-CoA + H2O. The catalysed reaction is a 4-saturated-(3S)-3-hydroxyacyl-CoA = a (3E)-enoyl-CoA + H2O. It catalyses the reaction a (3S)-3-hydroxyacyl-CoA + NAD(+) = a 3-oxoacyl-CoA + NADH + H(+). The enzyme catalyses (3S)-3-hydroxybutanoyl-CoA = (3R)-3-hydroxybutanoyl-CoA. It functions in the pathway lipid metabolism; fatty acid beta-oxidation. Its function is as follows. Catalyzes the formation of a hydroxyacyl-CoA by addition of water on enoyl-CoA. Also exhibits 3-hydroxyacyl-CoA epimerase and 3-hydroxyacyl-CoA dehydrogenase activities. In Escherichia coli O6:K15:H31 (strain 536 / UPEC), this protein is Fatty acid oxidation complex subunit alpha.